We begin with the raw amino-acid sequence, 66 residues long: MAFLKKSLFLVLFLGLVSLSICEEEKRETEEEENDQEEDDKSEEKRFLGLLPSIVSGAVSLVKKLG.

The N-terminal stretch at 1-22 (MAFLKKSLFLVLFLGLVSLSIC) is a signal peptide. Residues 23 to 44 (EEEKRETEEEENDQEEDDKSEE) constitute a propeptide that is removed on maturation. The interval 24 to 44 (EEKRETEEEENDQEEDDKSEE) is disordered. Residues 30 to 41 (EEEENDQEEDDK) are compositionally biased toward acidic residues. Position 65 is a leucine amide (leucine 65).

Expressed by the skin glands.

It localises to the secreted. Its function is as follows. Has antimicrobial activity. This chain is Phylloseptin-H9, found in Pithecopus hypochondrialis (Orange-legged leaf frog).